The sequence spans 133 residues: Small ribosomal subunit protein eS17 (133 aa).

This sequence belongs to the eukaryotic ribosomal protein eS17 family.

The protein is Small ribosomal subunit protein eS17 (RpS17) of Spodoptera frugiperda (Fall armyworm).